A 278-amino-acid chain; its full sequence is Short-chain dehydrogenase RED2 (278 aa).

NADP(+)-binding residues include Ile15, Asp70, Arg132, Tyr178, Lys182, Val211, and Thr213. Catalysis depends on Tyr178, which acts as the Proton donor. Catalysis depends on Lys182, which acts as the Lowers pKa of active site Tyr.

This sequence belongs to the short-chain dehydrogenases/reductases (SDR) family.

Its pathway is polyketide biosynthesis. Short-chain dehydrogenase; part of the gene cluster that mediates the biosynthesis of pyriculol and pyriculariol, two heptaketides that induce lesion formation upon application on rice leaves but are dispensable for pathogenicity. The highly reducing polyketide synthase synthesizes the heptaketide backbone of pyriculol and pyriculariol. Pyriculol and pyriculariol contain several hydroxyl moieties and double bonds, so it can be assumed that several reduction steps occur during biosynthesis. These reactions could be executed by PKS19 itself or partly by the tailoring enzymes OXR1, OXR2, RED1, RED2 or RED3, identified within the cluster. The FAD-linked oxidoreductase OXR1 is the only tailoring enzyme for which the function has been determined yet, and is involved in the oxidation of dihydropyriculol and dihydropyriculariol into pyriculol and pyriculariol, respectively. This is Short-chain dehydrogenase RED2 from Pyricularia oryzae (strain 70-15 / ATCC MYA-4617 / FGSC 8958) (Rice blast fungus).